The primary structure comprises 181 residues: Adenylate kinase (181 aa).

Residue Gly-10–Thr-15 coordinates ATP. The tract at residues Ser-30–Val-59 is NMP. AMP contacts are provided by residues Thr-31, Arg-36, Lys-57–Val-59, Gly-85–Arg-88, and Gln-92. The LID stretch occupies residues Ser-126–Asp-132. Arg-127 is an ATP binding site. The AMP site is built by Arg-129 and Arg-140. ATP is bound at residue Gly-166.

This sequence belongs to the adenylate kinase family. Monomer.

Its subcellular location is the cytoplasm. The catalysed reaction is AMP + ATP = 2 ADP. The protein operates within purine metabolism; AMP biosynthesis via salvage pathway; AMP from ADP: step 1/1. Functionally, catalyzes the reversible transfer of the terminal phosphate group between ATP and AMP. Plays an important role in cellular energy homeostasis and in adenine nucleotide metabolism. The protein is Adenylate kinase of Corynebacterium glutamicum (strain R).